The following is a 511-amino-acid chain: Myrosinase 4 (511 aa).

The signal sequence occupies residues 1–23; that stretch reads MAIPKAHYSLAVLVLLFVVVSSS. 3 disulfide bridges follow: cysteine 31-cysteine 450, cysteine 39-cysteine 445, and cysteine 230-cysteine 233. Residues asparagine 46 and asparagine 53 are each glycosylated (N-linked (GlcNAc...) asparagine). A beta-D-glucoside contacts are provided by residues glutamine 64, histidine 165, and 210 to 211; that span reads NQ. 2 residues coordinate a beta-D-glucoside: tyrosine 351 and glutamate 418. Catalysis depends on glutamate 418, which acts as the Nucleophile. N-linked (GlcNAc...) asparagine glycosylation is present at asparagine 428. Residues tryptophan 467, 474–475, and phenylalanine 483 each bind a beta-D-glucoside; that span reads EF. N-linked (GlcNAc...) asparagine glycosylation is present at asparagine 489.

This sequence belongs to the glycosyl hydrolase 1 family. In terms of tissue distribution, specifically expressed in roots.

It catalyses the reaction a thioglucoside + H2O = a sugar + a thiol.. It carries out the reaction Hydrolysis of terminal, non-reducing beta-D-glucosyl residues with release of beta-D-glucose.. Its function is as follows. Hydrolyzes sinigrin and, with lower efficiency, p-nitrophenyl beta-D-glucoside. This is Myrosinase 4 from Arabidopsis thaliana (Mouse-ear cress).